An 80-amino-acid chain; its full sequence is Small ribosomal subunit protein bS18 (80 aa).

It belongs to the bacterial ribosomal protein bS18 family. Part of the 30S ribosomal subunit. Forms a tight heterodimer with protein bS6.

Functionally, binds as a heterodimer with protein bS6 to the central domain of the 16S rRNA, where it helps stabilize the platform of the 30S subunit. The polypeptide is Small ribosomal subunit protein bS18 (Acholeplasma laidlawii (strain PG-8A)).